Reading from the N-terminus, the 173-residue chain is Ribosome maturation factor RimM (173 aa).

In terms of domain architecture, PRC barrel spans 94 to 173; sequence EGEFYWRDLI…TIEVDWDPGF (80 aa).

This sequence belongs to the RimM family. As to quaternary structure, binds ribosomal protein uS19.

The protein resides in the cytoplasm. An accessory protein needed during the final step in the assembly of 30S ribosomal subunit, possibly for assembly of the head region. Essential for efficient processing of 16S rRNA. May be needed both before and after RbfA during the maturation of 16S rRNA. It has affinity for free ribosomal 30S subunits but not for 70S ribosomes. The polypeptide is Ribosome maturation factor RimM (Aeromonas salmonicida (strain A449)).